A 235-amino-acid chain; its full sequence is Carboxy-S-adenosyl-L-methionine synthase (235 aa).

S-adenosyl-L-methionine-binding positions include Y35, 60 to 62 (GCS), 83 to 84 (DN), N124, and R191.

The protein belongs to the class I-like SAM-binding methyltransferase superfamily. Cx-SAM synthase family. As to quaternary structure, homodimer.

It carries out the reaction prephenate + S-adenosyl-L-methionine = carboxy-S-adenosyl-L-methionine + 3-phenylpyruvate + H2O. Catalyzes the conversion of S-adenosyl-L-methionine (SAM) to carboxy-S-adenosyl-L-methionine (Cx-SAM). The polypeptide is Carboxy-S-adenosyl-L-methionine synthase (Campylobacter jejuni subsp. jejuni serotype O:6 (strain 81116 / NCTC 11828)).